Consider the following 58-residue polypeptide: Mitochondrial import receptor subunit TOM7 homolog (58 aa).

The Cytoplasmic portion of the chain corresponds to 1 to 16 (MKLSPATKSFIGKTVD). The chain crosses the membrane as a helical span at residues 17 to 35 (ISTFAIQWGFVPFVVYLGF). Over 36–58 (KKGAEPMPNGQILPLSAMSLLWG) the chain is Mitochondrial intermembrane.

It belongs to the Tom7 family. Forms part of the preprotein translocase complex of the outer mitochondrial membrane (TOM complex).

The protein resides in the mitochondrion outer membrane. The polypeptide is Mitochondrial import receptor subunit TOM7 homolog (tomm-7) (Caenorhabditis elegans).